The following is a 113-amino-acid chain: MDTVRVAFLLVLVLAVSLGQADKDENRMEMQEKTEQGKSYLDFAENLLLQKLEELEAKLLEEDSEESRNSRQKRCIGEGVPCDENDPRCCSGLVCLKPTLHGIWYKSYYCYKK.

A signal peptide spans 1–21 (MDTVRVAFLLVLVLAVSLGQA). A propeptide spanning residues 22–74 (DKDENRMEMQEKTEQGKSYLDFAENLLLQKLEELEAKLLEEDSEESRNSRQKR) is cleaved from the precursor. The segment covering 60–69 (LEEDSEESRN) has biased composition (basic and acidic residues). Residues 60-83 (LEEDSEESRNSRQKRCIGEGVPCD) form a disordered region. Disulfide bonds link Cys75-Cys90, Cys82-Cys95, and Cys89-Cys110.

The protein belongs to the neurotoxin 14 (magi-1) family. 01 (HNTX-16) subfamily. As to expression, expressed by the venom gland.

It localises to the secreted. Its function is as follows. Probable ion channel inhibitor. The sequence is that of U11-theraphotoxin-Hhn1a from Cyriopagopus hainanus (Chinese bird spider).